We begin with the raw amino-acid sequence, 403 residues long: Aminomethyltransferase, mitochondrial (403 aa).

The transit peptide at 1 to 28 (MHRIVSVVAPLGFRLQAQPLVQSRPLSS) directs the protein to the mitochondrion. E232 and R261 together coordinate substrate. Residue K368 is modified to N6-succinyllysine. A substrate-binding site is contributed by Y399.

Belongs to the GcvT family. The glycine cleavage system is composed of four proteins: P, T, L and H.

The protein resides in the mitochondrion. The catalysed reaction is N(6)-[(R)-S(8)-aminomethyldihydrolipoyl]-L-lysyl-[protein] + (6S)-5,6,7,8-tetrahydrofolate = N(6)-[(R)-dihydrolipoyl]-L-lysyl-[protein] + (6R)-5,10-methylene-5,6,7,8-tetrahydrofolate + NH4(+). Its function is as follows. The glycine cleavage system catalyzes the degradation of glycine. This is Aminomethyltransferase, mitochondrial from Mus musculus (Mouse).